A 460-amino-acid chain; its full sequence is V-type ATP synthase beta chain (460 aa).

Belongs to the ATPase alpha/beta chains family.

Produces ATP from ADP in the presence of a proton gradient across the membrane. The V-type beta chain is a regulatory subunit. The polypeptide is V-type ATP synthase beta chain (Acetivibrio thermocellus (strain ATCC 27405 / DSM 1237 / JCM 9322 / NBRC 103400 / NCIMB 10682 / NRRL B-4536 / VPI 7372) (Clostridium thermocellum)).